Reading from the N-terminus, the 998-residue chain is Mediator of RNA polymerase II transcription subunit 14 (998 aa).

This sequence belongs to the Mediator complex subunit 14 family. Component of the Mediator complex.

The protein localises to the nucleus. In terms of biological role, component of the Mediator complex, a coactivator involved in the regulated transcription of nearly all RNA polymerase II-dependent genes. Mediator functions as a bridge to convey information from gene-specific regulatory proteins to the basal RNA polymerase II transcription machinery. Mediator is recruited to promoters by direct interactions with regulatory proteins and serves as a scaffold for the assembly of a functional preinitiation complex with RNA polymerase II and the general transcription factors. In Kluyveromyces lactis (strain ATCC 8585 / CBS 2359 / DSM 70799 / NBRC 1267 / NRRL Y-1140 / WM37) (Yeast), this protein is Mediator of RNA polymerase II transcription subunit 14 (RGR1).